Here is a 211-residue protein sequence, read N- to C-terminus: Uracil phosphoribosyltransferase (211 aa).

Residues R78, R103, and 130 to 138 each bind 5-phospho-alpha-D-ribose 1-diphosphate; that span reads DPMLATGGT. Uracil is bound by residues I195 and 200–202; that span reads GDA. A 5-phospho-alpha-D-ribose 1-diphosphate-binding site is contributed by D201.

The protein belongs to the UPRTase family. It depends on Mg(2+) as a cofactor.

It catalyses the reaction UMP + diphosphate = 5-phospho-alpha-D-ribose 1-diphosphate + uracil. Its pathway is pyrimidine metabolism; UMP biosynthesis via salvage pathway; UMP from uracil: step 1/1. Its activity is regulated as follows. Allosterically activated by GTP. Its function is as follows. Catalyzes the conversion of uracil and 5-phospho-alpha-D-ribose 1-diphosphate (PRPP) to UMP and diphosphate. The protein is Uracil phosphoribosyltransferase of Streptomyces avermitilis (strain ATCC 31267 / DSM 46492 / JCM 5070 / NBRC 14893 / NCIMB 12804 / NRRL 8165 / MA-4680).